Here is a 217-residue protein sequence, read N- to C-terminus: Probable GTP-binding protein EngB (217 aa).

The EngB-type G domain occupies Glu27–Glu201. GTP-binding positions include Gly35–Ser42, Gly62–Leu66, Asp80–Gly83, Thr147–Asp150, and Phe180–Ser182. Residues Ser42 and Thr64 each contribute to the Mg(2+) site.

The protein belongs to the TRAFAC class TrmE-Era-EngA-EngB-Septin-like GTPase superfamily. EngB GTPase family. It depends on Mg(2+) as a cofactor.

Its function is as follows. Necessary for normal cell division and for the maintenance of normal septation. In Yersinia enterocolitica serotype O:8 / biotype 1B (strain NCTC 13174 / 8081), this protein is Probable GTP-binding protein EngB.